Consider the following 102-residue polypeptide: Small ribosomal subunit protein uS10 (102 aa).

The protein belongs to the universal ribosomal protein uS10 family. As to quaternary structure, part of the 30S ribosomal subunit.

Involved in the binding of tRNA to the ribosomes. The protein is Small ribosomal subunit protein uS10 of Geobacter metallireducens (strain ATCC 53774 / DSM 7210 / GS-15).